Here is a 278-residue protein sequence, read N- to C-terminus: Ribosomal RNA small subunit methyltransferase A (278 aa).

Residues Asn-27, Leu-29, Gly-54, Glu-75, Asp-101, and Asn-122 each coordinate S-adenosyl-L-methionine.

This sequence belongs to the class I-like SAM-binding methyltransferase superfamily. rRNA adenine N(6)-methyltransferase family. RsmA subfamily.

Its subcellular location is the cytoplasm. The enzyme catalyses adenosine(1518)/adenosine(1519) in 16S rRNA + 4 S-adenosyl-L-methionine = N(6)-dimethyladenosine(1518)/N(6)-dimethyladenosine(1519) in 16S rRNA + 4 S-adenosyl-L-homocysteine + 4 H(+). In terms of biological role, specifically dimethylates two adjacent adenosines (A1518 and A1519) in the loop of a conserved hairpin near the 3'-end of 16S rRNA in the 30S particle. May play a critical role in biogenesis of 30S subunits. In Brucella anthropi (strain ATCC 49188 / DSM 6882 / CCUG 24695 / JCM 21032 / LMG 3331 / NBRC 15819 / NCTC 12168 / Alc 37) (Ochrobactrum anthropi), this protein is Ribosomal RNA small subunit methyltransferase A.